The chain runs to 552 residues: Formate--tetrahydrofolate ligase (552 aa).

Residue 65–72 (TPAGEGKT) coordinates ATP.

Belongs to the formate--tetrahydrofolate ligase family.

It catalyses the reaction (6S)-5,6,7,8-tetrahydrofolate + formate + ATP = (6R)-10-formyltetrahydrofolate + ADP + phosphate. It functions in the pathway one-carbon metabolism; tetrahydrofolate interconversion. The protein is Formate--tetrahydrofolate ligase of Fervidobacterium nodosum (strain ATCC 35602 / DSM 5306 / Rt17-B1).